The chain runs to 384 residues: Deoxyguanosinetriphosphate triphosphohydrolase-like protein (384 aa).

The HD domain occupies 62 to 198; sequence RLTHSLEVST…AALADDISYI (137 aa).

It belongs to the dGTPase family. Type 2 subfamily.

This chain is Deoxyguanosinetriphosphate triphosphohydrolase-like protein, found in Rickettsia peacockii (strain Rustic).